The sequence spans 332 residues: Cysteine and histidine-rich domain-containing protein 1 (332 aa).

Ala2 carries the N-acetylalanine modification. The interaction with PPP5C stretch occupies residues 2-77; sequence ALLCYNRGCG…KPPEPVKPEV (76 aa). Cys5, Cys10, Cys24, His27, Cys42, and Cys43 together coordinate Zn(2+). CHORD domains follow at residues 5 to 64 and 157 to 216; these read CYNR…KGRH and CKNG…TGKH. Thr47 bears the Phosphothreonine mark. The residue at position 51 (Ser51) is a Phosphoserine. The Zn(2+) site is built by Cys59, His64, Cys157, Cys162, Cys176, His179, Cys194, Cys195, Cys211, and His216. The segment at 62-82 is disordered; the sequence is GRHNSEKPPEPVKPEVKTTEK. Over residues 64–82 the composition is skewed to basic and acidic residues; that stretch reads HNSEKPPEPVKPEVKTTEK. The tract at residues 65–316 is interaction with HSP90AA1 and HSP90AB1; sequence NSEKPPEPVK…AEPMQWASLE (252 aa). Positions 227–316 constitute a CS domain; that stretch reads VVPCRHDWHQ…AEPMQWASLE (90 aa).

In terms of assembly, interacts with HSP90AA1, HSP90AB1, PPP5C, ROCK1 and ROCK2.

Its function is as follows. Regulates centrosome duplication, probably by inhibiting the kinase activity of ROCK2. Proposed to act as co-chaperone for HSP90. May play a role in the regulation of NOD1 via a HSP90 chaperone complex. In vitro, has intrinsic chaperone activity. This function may be achieved by inhibiting association of ROCK2 with NPM1. Plays a role in ensuring the localization of the tyrosine kinase receptor EGFR to the plasma membrane, and thus ensures the subsequent regulation of EGFR activity and EGF-induced actin cytoskeleton remodeling. Involved in stress response. Prevents tumorigenesis. The chain is Cysteine and histidine-rich domain-containing protein 1 (CHORDC1) from Bos taurus (Bovine).